Here is a 518-residue protein sequence, read N- to C-terminus: Calcium and calcium/calmodulin-dependent serine/threonine-protein kinase (518 aa).

The 288-residue stretch at 13–300 folds into the Protein kinase domain; it reads YEISEILGRG…AQELLSHPWV (288 aa). ATP-binding positions include 19–27 and K44; that span reads LGRGGFSVV. The active-site Proton acceptor is the D165. A Phosphothreonine modification is found at T265. Residues 323 to 336 are calmodulin-binding; it reads ARRKLRAAAIASVW. Positions 344-365 form a coiled coil; it reads TKKLRSLVGTYDLKEEEIESLR. EF-hand domains lie at 394–429, 430–465, and 472–507; these read SLIP…LKNS, KGDD…LPEE, and TEPG…DSSL. Ca(2+) is bound by residues D407, N409, D411, T413, E418, D443, D445, S447, C449, E454, D485, N487, D489, K491, and E496.

Belongs to the protein kinase superfamily. CAMK Ser/Thr protein kinase family. CaMK subfamily. In terms of assembly, interacts with IPD3. Interacts with CIP73. Autophosphorylation stimulated by calcium. Occurs probably by an intermolecular mechanism. As to expression, mainly expressed in roots and nodules. Detected in leaves, stems and cotyledons.

It localises to the nucleus. The enzyme catalyses L-seryl-[protein] + ATP = O-phospho-L-seryl-[protein] + ADP + H(+). It catalyses the reaction L-threonyl-[protein] + ATP = O-phospho-L-threonyl-[protein] + ADP + H(+). Activated by calcium/calmodulin binding after calcium-induced autophosphorylation. In terms of biological role, calcium- and calmodulin-dependent protein kinase necessary and sufficient for dedifferentiation of root cortical cells into nodule initials. Not required for calcium spiking. Acts as central regulator of the nodule organogenesis program. Required for root hair curling and infection thread (IT) formation upon rhizobial infection, and arbuscule formation during arbuscular mycorrhiza (AM) fungal infection. Phosphorylates the downstream target IPD3, a protein required for root infection by symbiotic rhizobia and AM fungi. Phosphorylates the downstream target CIP73, a protein required for root nodule organogenesis. Mediates the phosphorylation of leghemoglobins (e.g. LB1) to modulate their oxygen O(2) affinity, thus regulating the diffusion of oxygen to the bacteroids in nodules. The polypeptide is Calcium and calcium/calmodulin-dependent serine/threonine-protein kinase (Lotus japonicus (Lotus corniculatus var. japonicus)).